We begin with the raw amino-acid sequence, 119 residues long: Evasin P983 (119 aa).

The signal sequence occupies residues 1-21; sequence MKASFCVIASCLVVFALKGTA. Intrachain disulfides connect C37-C59, C55-C97, C72-C102, and C92-C111. Residues N48 and N67 are each glycosylated (N-linked (GlcNAc...) asparagine).

It localises to the secreted. In terms of biological role, salivary chemokine-binding protein which binds to host chemokines CCL2, CCL3 and CCL8. The chain is Evasin P983 from Amblyomma cajennense (Cayenne tick).